Reading from the N-terminus, the 338-residue chain is Aspartate-semialdehyde dehydrogenase (338 aa).

NADP(+) contacts are provided by residues 13-16 (TGNV) and 41-42 (NS). Arginine 101 contacts phosphate. The active-site Acyl-thioester intermediate is the cysteine 132. Glutamine 159 contacts substrate. 162–163 (SG) is a binding site for NADP(+). Residue lysine 216 coordinates phosphate. Residue arginine 237 participates in substrate binding. Catalysis depends on histidine 244, which acts as the Proton acceptor. An NADP(+)-binding site is contributed by asparagine 317.

This sequence belongs to the aspartate-semialdehyde dehydrogenase family. In terms of assembly, homodimer.

It carries out the reaction L-aspartate 4-semialdehyde + phosphate + NADP(+) = 4-phospho-L-aspartate + NADPH + H(+). Its pathway is amino-acid biosynthesis; L-lysine biosynthesis via DAP pathway; (S)-tetrahydrodipicolinate from L-aspartate: step 2/4. It functions in the pathway amino-acid biosynthesis; L-methionine biosynthesis via de novo pathway; L-homoserine from L-aspartate: step 2/3. It participates in amino-acid biosynthesis; L-threonine biosynthesis; L-threonine from L-aspartate: step 2/5. In terms of biological role, catalyzes the NADPH-dependent formation of L-aspartate-semialdehyde (L-ASA) by the reductive dephosphorylation of L-aspartyl-4-phosphate. The protein is Aspartate-semialdehyde dehydrogenase of Rickettsia bellii (strain RML369-C).